A 164-amino-acid chain; its full sequence is NADH-quinone oxidoreductase subunit C (164 aa).

It belongs to the complex I 30 kDa subunit family. As to quaternary structure, NDH-1 is composed of 14 different subunits. Subunits NuoB, C, D, E, F, and G constitute the peripheral sector of the complex.

It localises to the cell inner membrane. It carries out the reaction a quinone + NADH + 5 H(+)(in) = a quinol + NAD(+) + 4 H(+)(out). NDH-1 shuttles electrons from NADH, via FMN and iron-sulfur (Fe-S) centers, to quinones in the respiratory chain. The immediate electron acceptor for the enzyme in this species is believed to be ubiquinone. Couples the redox reaction to proton translocation (for every two electrons transferred, four hydrogen ions are translocated across the cytoplasmic membrane), and thus conserves the redox energy in a proton gradient. This is NADH-quinone oxidoreductase subunit C from Geotalea uraniireducens (strain Rf4) (Geobacter uraniireducens).